Here is a 258-residue protein sequence, read N- to C-terminus: Deoxyribose-phosphate aldolase (258 aa).

Aspartate 102 acts as the Proton donor/acceptor in catalysis. Residue lysine 165 is the Schiff-base intermediate with acetaldehyde of the active site. Lysine 199 serves as the catalytic Proton donor/acceptor.

It belongs to the DeoC/FbaB aldolase family. DeoC type 2 subfamily.

The protein resides in the cytoplasm. The catalysed reaction is 2-deoxy-D-ribose 5-phosphate = D-glyceraldehyde 3-phosphate + acetaldehyde. Its pathway is carbohydrate degradation; 2-deoxy-D-ribose 1-phosphate degradation; D-glyceraldehyde 3-phosphate and acetaldehyde from 2-deoxy-alpha-D-ribose 1-phosphate: step 2/2. In terms of biological role, catalyzes a reversible aldol reaction between acetaldehyde and D-glyceraldehyde 3-phosphate to generate 2-deoxy-D-ribose 5-phosphate. The sequence is that of Deoxyribose-phosphate aldolase from Vibrio campbellii (strain ATCC BAA-1116).